Reading from the N-terminus, the 417-residue chain is UDP-N-acetylglucosamine 1-carboxyvinyltransferase (417 aa).

22 to 23 is a phosphoenolpyruvate binding site; sequence KN. Arg92 contacts UDP-N-acetyl-alpha-D-glucosamine. Catalysis depends on Cys116, which acts as the Proton donor. 2-(S-cysteinyl)pyruvic acid O-phosphothioketal is present on Cys116. UDP-N-acetyl-alpha-D-glucosamine is bound by residues Asp304 and Ile326.

Belongs to the EPSP synthase family. MurA subfamily.

Its subcellular location is the cytoplasm. The catalysed reaction is phosphoenolpyruvate + UDP-N-acetyl-alpha-D-glucosamine = UDP-N-acetyl-3-O-(1-carboxyvinyl)-alpha-D-glucosamine + phosphate. It participates in cell wall biogenesis; peptidoglycan biosynthesis. Functionally, cell wall formation. Adds enolpyruvyl to UDP-N-acetylglucosamine. The protein is UDP-N-acetylglucosamine 1-carboxyvinyltransferase of Geotalea uraniireducens (strain Rf4) (Geobacter uraniireducens).